Reading from the N-terminus, the 368-residue chain is 3-dehydroquinate synthase (368 aa).

NAD(+) contacts are provided by residues 71 to 76, 105 to 109, 129 to 130, lysine 142, lysine 151, and 169 to 172; these read DGEAFK, GVVGD, TT, and TLRT. Zn(2+) contacts are provided by glutamate 184, histidine 247, and histidine 264.

This sequence belongs to the sugar phosphate cyclases superfamily. Dehydroquinate synthase family. Requires Co(2+) as cofactor. Zn(2+) serves as cofactor. NAD(+) is required as a cofactor.

The protein localises to the cytoplasm. It catalyses the reaction 7-phospho-2-dehydro-3-deoxy-D-arabino-heptonate = 3-dehydroquinate + phosphate. It participates in metabolic intermediate biosynthesis; chorismate biosynthesis; chorismate from D-erythrose 4-phosphate and phosphoenolpyruvate: step 2/7. Its function is as follows. Catalyzes the conversion of 3-deoxy-D-arabino-heptulosonate 7-phosphate (DAHP) to dehydroquinate (DHQ). This is 3-dehydroquinate synthase from Cupriavidus taiwanensis (strain DSM 17343 / BCRC 17206 / CCUG 44338 / CIP 107171 / LMG 19424 / R1) (Ralstonia taiwanensis (strain LMG 19424)).